Consider the following 201-residue polypeptide: Large ribosomal subunit protein bL25 (201 aa).

It belongs to the bacterial ribosomal protein bL25 family. CTC subfamily. As to quaternary structure, part of the 50S ribosomal subunit; part of the 5S rRNA/L5/L18/L25 subcomplex. Contacts the 5S rRNA. Binds to the 5S rRNA independently of L5 and L18.

Functionally, this is one of the proteins that binds to the 5S RNA in the ribosome where it forms part of the central protuberance. The protein is Large ribosomal subunit protein bL25 of Thiobacillus denitrificans (strain ATCC 25259 / T1).